Reading from the N-terminus, the 80-residue chain is Cell division protein ZapB (80 aa).

Residues 3 to 80 (FEVLEQLEAK…NLLGKMDDVE (78 aa)) adopt a coiled-coil conformation.

This sequence belongs to the ZapB family. As to quaternary structure, homodimer. The ends of the coiled-coil dimer bind to each other, forming polymers. Interacts with FtsZ.

The protein localises to the cytoplasm. In terms of biological role, non-essential, abundant cell division factor that is required for proper Z-ring formation. It is recruited early to the divisome by direct interaction with FtsZ, stimulating Z-ring assembly and thereby promoting cell division earlier in the cell cycle. Its recruitment to the Z-ring requires functional FtsA or ZipA. In Vibrio atlanticus (strain LGP32) (Vibrio splendidus (strain Mel32)), this protein is Cell division protein ZapB.